The sequence spans 194 residues: NADH-quinone oxidoreductase subunit B (194 aa).

A disordered region spans residues 1-26; that stretch reads MGLTPSATKPEIAQAPQGIVDPSTGR. Cysteine 73, cysteine 74, cysteine 138, and cysteine 168 together coordinate [4Fe-4S] cluster.

Belongs to the complex I 20 kDa subunit family. In terms of assembly, NDH-1 is composed of 14 different subunits. Subunits NuoB, C, D, E, F, and G constitute the peripheral sector of the complex. Requires [4Fe-4S] cluster as cofactor.

It is found in the cell inner membrane. It catalyses the reaction a quinone + NADH + 5 H(+)(in) = a quinol + NAD(+) + 4 H(+)(out). In terms of biological role, NDH-1 shuttles electrons from NADH, via FMN and iron-sulfur (Fe-S) centers, to quinones in the respiratory chain. The immediate electron acceptor for the enzyme in this species is believed to be ubiquinone. Couples the redox reaction to proton translocation (for every two electrons transferred, four hydrogen ions are translocated across the cytoplasmic membrane), and thus conserves the redox energy in a proton gradient. This chain is NADH-quinone oxidoreductase subunit B, found in Xanthobacter autotrophicus (strain ATCC BAA-1158 / Py2).